The following is a 2698-amino-acid chain: Chromodomain-helicase-DNA-binding protein 6 (2698 aa).

Basic and acidic residues-rich tracts occupy residues 1–12 (MKMKIQKKEKQL), 100–115 (EPGEQEGTKASKDREP), and 122–171 (EPKE…KRSC). The segment at 1–243 (MKMKIQKKEK…KRRSGRQVKR (243 aa)) is disordered. The tract at residues 1-746 (MKMKIQKKEK…MMELRKCCNH (746 aa)) is required for DNA-dependent ATPase activity. Residues 213-224 (QSLPNPSLQSPE) are compositionally biased toward low complexity. Chromo domains follow at residues 291–342 (NIIE…KDPR) and 374–438 (IEID…KPVE). One can recognise a Helicase ATP-binding domain in the interval 472–646 (LFNWYNRKNC…FSLLNFLEPS (175 aa)). 485-492 (DEMGLGKT) contacts ATP. The DEAH box motif lies at 597-600 (DEAH). Residues 786–955 (LIDKLLPKLI…LSKMEVEDLL (170 aa)) form the Helicase C-terminal domain. Positions 1318–1370 (SLSAEQGVTDGTSDIPERGNIDKEDSAEDKVDGLQKQTASPSDGSDGIFGEKK) are disordered. A compositionally biased stretch (polar residues) spans 1320–1329 (SAEQGVTDGT). A compositionally biased stretch (basic and acidic residues) spans 1332–1350 (IPERGNIDKEDSAEDKVDG). One can recognise a Myb-like domain in the interval 1435 to 1489 (RWTRREQADFYRTVSSFGVVYDQEKEAFDWTQFRAISRLDKKSDENLEHYFHSFV). Polar residues predominate over residues 1707 to 1730 (EPRSFQEAPSTNMQSRKKTVTVSA). The segment at 1707 to 1731 (EPRSFQEAPSTNMQSRKKTVTVSAS) is disordered. Ser-1852 is modified (phosphoserine). Disordered regions lie at residues 1935–2046 (GLGS…ASGI), 2111–2137 (LPTPVLSSSAGSRSSLSEPEATEHSFS), 2308–2337 (TTLNTTHPEGPGAASSASEPTAAASSQAEK), 2359–2387 (PGFGASFSDKPKQRRPRCKEPGKLDIGSL), 2538–2587 (ASLA…PTIT), and 2626–2698 (QGRH…DDTN). 3 stretches are compositionally biased toward basic and acidic residues: residues 1943 to 1955 (GEKPKAYEPDPYR), 1975 to 1991 (FKLKHELLKEPWKESSE), and 2004 to 2024 (SEPKSEEMDFENKDDYEKDGA). 2 stretches are compositionally biased toward low complexity: residues 2117-2127 (SSSAGSRSSLS) and 2315-2336 (PEGPGAASSASEPTAAASSQAE). The span at 2538–2550 (ASLASTKSGASAT) shows a compositional bias: low complexity. The segment covering 2552 to 2573 (KTTEDELSGRDVKADSLVEDKP) has biased composition (basic and acidic residues). Composition is skewed to polar residues over residues 2578-2587 (FSDQSEPTIT) and 2664-2675 (SDQNCTESSVTV). Residues 2677-2698 (PEREHVAQAREEGLKDSNDDTN) show a composition bias toward basic and acidic residues.

It belongs to the SNF2/RAD54 helicase family. In terms of assembly, interacts with NFE2L2; involved in activation of the transcription. May interact with PPARA. As to expression, widely expressed.

The protein resides in the nucleus. The protein localises to the nucleoplasm. The enzyme catalyses ATP + H2O = ADP + phosphate + H(+). In terms of biological role, ATP-dependent chromatin-remodeling factor. Regulates transcription by disrupting nucleosomes in a largely non-sliding manner which strongly increases the accessibility of chromatin. Activates transcription of specific genes in response to oxidative stress through interaction with NFE2L2. The polypeptide is Chromodomain-helicase-DNA-binding protein 6 (Chd6) (Rattus norvegicus (Rat)).